We begin with the raw amino-acid sequence, 78 residues long: Acyl carrier protein (78 aa).

The region spanning 4-78 (AEIRDKVYDI…QQAIDYIVKK (75 aa)) is the Carrier domain. Residue S39 is modified to O-(pantetheine 4'-phosphoryl)serine.

The protein belongs to the acyl carrier protein (ACP) family. 4'-phosphopantetheine is transferred from CoA to a specific serine of apo-ACP by AcpS. This modification is essential for activity because fatty acids are bound in thioester linkage to the sulfhydryl of the prosthetic group.

Its subcellular location is the cytoplasm. It functions in the pathway lipid metabolism; fatty acid biosynthesis. In terms of biological role, carrier of the growing fatty acid chain in fatty acid biosynthesis. The sequence is that of Acyl carrier protein from Chlorobium luteolum (strain DSM 273 / BCRC 81028 / 2530) (Pelodictyon luteolum).